The primary structure comprises 1040 residues: Putative protein tag-76 (1040 aa).

Residues 1 to 15 (MSRRNATSFVDNNTL) show a composition bias toward polar residues. 2 disordered regions span residues 1 to 61 (MSRR…GSVS) and 322 to 367 (RTSK…PGAN). Low complexity predominate over residues 16 to 32 (TSSGISGSGSMSPPITS). Residues 33–50 (RPASGQASPLTSNGSLSP) show a composition bias toward polar residues. Residues 333-356 (GPGGPGGPGGYRGGRGGGRGGSYG) are compositionally biased toward gly residues. A PAZ domain is found at 379–486 (FTMDTLSRDT…LPMEHCLIDS (108 aa)). One can recognise a Piwi domain in the interval 660–966 (CIIVVLQSKN…VATRARCHVK (307 aa)).

This Caenorhabditis elegans protein is Putative protein tag-76 (tag-76).